The following is a 365-amino-acid chain: Protein-glutamate methylesterase/protein-glutamine glutaminase 2 (365 aa).

Positions 6-123 (RVLIIDDSAS…ADSLSDDAMR (118 aa)) constitute a Response regulatory domain. A 4-aspartylphosphate modification is found at Asp-57. One can recognise a CheB-type methylesterase domain in the interval 173–359 (AKTTEMVVCV…PLDQIAREVL (187 aa)). Catalysis depends on residues Ser-185, His-211, and Asp-307.

It belongs to the CheB family. Post-translationally, phosphorylated by CheA. Phosphorylation of the N-terminal regulatory domain activates the methylesterase activity.

It localises to the cytoplasm. It catalyses the reaction [protein]-L-glutamate 5-O-methyl ester + H2O = L-glutamyl-[protein] + methanol + H(+). The catalysed reaction is L-glutaminyl-[protein] + H2O = L-glutamyl-[protein] + NH4(+). In terms of biological role, involved in chemotaxis. Part of a chemotaxis signal transduction system that modulates chemotaxis in response to various stimuli. Catalyzes the demethylation of specific methylglutamate residues introduced into the chemoreceptors (methyl-accepting chemotaxis proteins or MCP) by CheR. Also mediates the irreversible deamidation of specific glutamine residues to glutamic acid. In Rhizobium johnstonii (strain DSM 114642 / LMG 32736 / 3841) (Rhizobium leguminosarum bv. viciae), this protein is Protein-glutamate methylesterase/protein-glutamine glutaminase 2.